The following is a 250-amino-acid chain: Ribosomal RNA small subunit methyltransferase J (250 aa).

S-adenosyl-L-methionine-binding positions include 101-102, 117-118, 153-154, and D171; these read RD, ER, and SS.

Belongs to the methyltransferase superfamily. RsmJ family.

It localises to the cytoplasm. It catalyses the reaction guanosine(1516) in 16S rRNA + S-adenosyl-L-methionine = N(2)-methylguanosine(1516) in 16S rRNA + S-adenosyl-L-homocysteine + H(+). In terms of biological role, specifically methylates the guanosine in position 1516 of 16S rRNA. In Escherichia coli O81 (strain ED1a), this protein is Ribosomal RNA small subunit methyltransferase J.